We begin with the raw amino-acid sequence, 111 residues long: Small ribosomal subunit protein bS16 (111 aa).

The disordered stretch occupies residues 92-111; that stretch reads EKGVKESNEIVEPEGEEVKE. Residues 100–111 show a composition bias toward acidic residues; sequence EIVEPEGEEVKE.

The protein belongs to the bacterial ribosomal protein bS16 family.

The protein is Small ribosomal subunit protein bS16 of Petrotoga mobilis (strain DSM 10674 / SJ95).